The sequence spans 765 residues: MFSLKQPKPSFRSYLLPPQQEDKLNPETKIKKLKAVLLPGEIVVNEVNFVRKCIASDTSQYDLWGKLICTNFKISFITENSVPFQRFHYKNLLLGEHDVPLTCIEQIVVVNDTKRKQKILSHNQKLKFNPTELIIYCKDFRILRFRFDEAGPESAKKVCLALAHYSQPTDLQLLFAFEYVAQMYHKPEYKVNGIDPGGGGDFCQRTPLFETYSDWDREIKRTGASDWRVCSVNEGYMISTCLPEYFVVPSSLADQDLKQYSHAFVGRRMPLWCWNHSNGSALVRMASIKDLLQQRKIGQRVCSGITRSHPLRSDVYKCDLDHNVPSIQDIQAAFSKLRQLCVNEPFDETEEKWLSSLENAQWLEFVRTFLKQAAELAYVLDFSRRSVVLQEEEGRDVSCLVASLVQLMLDPYFRTIVGFQSLIQKEWVMSAYPFLDRCNHLKRSEKESPLFVLFLDCVWQLLQQYPAAFQFTETYLTVLHDSTRISLFGTFLFNSPHQRVQQSTEFAIARNIQLGEEKGLKFPSVWDWSLQFSAKDRALFNNPLYIGKSVPCVQNGAVKSFKRTKNYSSTMRGMPPSVKNGMAIQQDFMPRRNSLILKLKPEILQQVPVIIPSSGFEQYLRDWFTKPADLHGVILPCLHGTHIKLWKLCYLRWTPEAQINHGGFITAFHKISLLASEIELLQSRLRQYRAYPLSTVTSPVGEQNRMFFRPDELHSSNGSLDILTSSFPFSPIGNLCRRSILGTPLSKFINGAKIWLSTETLANED.

Residues 209-650 (FETYSDWDRE…THIKLWKLCY (442 aa)) enclose the Myotubularin phosphatase domain.

This sequence belongs to the protein-tyrosine phosphatase family. Non-receptor class myotubularin subfamily.

The chain is Myotubularin-related protein 10-A (mtmr10-a) from Xenopus laevis (African clawed frog).